The primary structure comprises 314 residues: DNA-directed RNA polymerase subunit alpha (314 aa).

The interval 1–228 is alpha N-terminal domain (alpha-NTD); it reads MIEFEKPKIH…EHLAIFVNLN (228 aa). The tract at residues 245 to 314 is alpha C-terminal domain (alpha-CTD); sequence KEKMLEMTIE…LLGLGFRSED (70 aa).

This sequence belongs to the RNA polymerase alpha chain family. In terms of assembly, homodimer. The RNAP catalytic core consists of 2 alpha, 1 beta, 1 beta' and 1 omega subunit. When a sigma factor is associated with the core the holoenzyme is formed, which can initiate transcription.

The enzyme catalyses RNA(n) + a ribonucleoside 5'-triphosphate = RNA(n+1) + diphosphate. Its function is as follows. DNA-dependent RNA polymerase catalyzes the transcription of DNA into RNA using the four ribonucleoside triphosphates as substrates. In Pediococcus pentosaceus (strain ATCC 25745 / CCUG 21536 / LMG 10740 / 183-1w), this protein is DNA-directed RNA polymerase subunit alpha.